Reading from the N-terminus, the 210-residue chain is Ion-translocating oxidoreductase complex subunit G (210 aa).

Residues 9–29 (GVTLAVFAAITTGLTAVINAV) traverse the membrane as a helical segment. Thr175 is subject to FMN phosphoryl threonine.

This sequence belongs to the RnfG family. As to quaternary structure, the complex is composed of six subunits: RnfA, RnfB, RnfC, RnfD, RnfE and RnfG. The cofactor is FMN.

Its subcellular location is the cell inner membrane. Functionally, part of a membrane-bound complex that couples electron transfer with translocation of ions across the membrane. This is Ion-translocating oxidoreductase complex subunit G from Erwinia tasmaniensis (strain DSM 17950 / CFBP 7177 / CIP 109463 / NCPPB 4357 / Et1/99).